The sequence spans 446 residues: L-2-hydroxyglutarate dehydrogenase, mitochondrial (446 aa).

Residues 1-28 (MKNSSSMLKGVKSFIGSGIYTNKPIYDV) constitute a mitochondrion transit peptide.

This sequence belongs to the L2HGDH family. Requires FAD as cofactor.

The protein localises to the mitochondrion. The catalysed reaction is (S)-2-hydroxyglutarate + A = 2-oxoglutarate + AH2. The protein is L-2-hydroxyglutarate dehydrogenase, mitochondrial (l2hgdh) of Dictyostelium discoideum (Social amoeba).